Reading from the N-terminus, the 425-residue chain is Serine--tRNA ligase (425 aa).

Residues 110 to 134 form a disordered region; sequence NLPSADAPEGKSEADNVEVKRWGEP. Positions 117–134 are enriched in basic and acidic residues; the sequence is PEGKSEADNVEVKRWGEP. 233-235 provides a ligand contact to L-serine; that stretch reads TAE. 264 to 266 is an ATP binding site; it reads RRE. Glu-287 lines the L-serine pocket. 351–354 contacts ATP; it reads EISS. Ser-385 serves as a coordination point for L-serine.

The protein belongs to the class-II aminoacyl-tRNA synthetase family. Type-1 seryl-tRNA synthetase subfamily. In terms of assembly, homodimer. The tRNA molecule binds across the dimer.

The protein localises to the cytoplasm. The enzyme catalyses tRNA(Ser) + L-serine + ATP = L-seryl-tRNA(Ser) + AMP + diphosphate + H(+). It carries out the reaction tRNA(Sec) + L-serine + ATP = L-seryl-tRNA(Sec) + AMP + diphosphate + H(+). It participates in aminoacyl-tRNA biosynthesis; selenocysteinyl-tRNA(Sec) biosynthesis; L-seryl-tRNA(Sec) from L-serine and tRNA(Sec): step 1/1. Functionally, catalyzes the attachment of serine to tRNA(Ser). Is also able to aminoacylate tRNA(Sec) with serine, to form the misacylated tRNA L-seryl-tRNA(Sec), which will be further converted into selenocysteinyl-tRNA(Sec). The chain is Serine--tRNA ligase from Synechococcus sp. (strain RCC307).